The following is a 393-amino-acid chain: NAD(P)H-quinone oxidoreductase subunit H, chloroplastic (393 aa).

It belongs to the complex I 49 kDa subunit family. As to quaternary structure, NDH is composed of at least 16 different subunits, 5 of which are encoded in the nucleus.

It localises to the plastid. The protein resides in the chloroplast thylakoid membrane. It carries out the reaction a plastoquinone + NADH + (n+1) H(+)(in) = a plastoquinol + NAD(+) + n H(+)(out). It catalyses the reaction a plastoquinone + NADPH + (n+1) H(+)(in) = a plastoquinol + NADP(+) + n H(+)(out). NDH shuttles electrons from NAD(P)H:plastoquinone, via FMN and iron-sulfur (Fe-S) centers, to quinones in the photosynthetic chain and possibly in a chloroplast respiratory chain. The immediate electron acceptor for the enzyme in this species is believed to be plastoquinone. Couples the redox reaction to proton translocation, and thus conserves the redox energy in a proton gradient. In Brachypodium distachyon (Purple false brome), this protein is NAD(P)H-quinone oxidoreductase subunit H, chloroplastic.